The chain runs to 1505 residues: Homeobox protein cut-like 1 (1505 aa).

Positions 56-407 (LLKSFQGEID…ALRISNSDLS (352 aa)) form a coiled coil. Polar residues-rich tracts occupy residues 396 to 407 (NAALRISNSDLS) and 440 to 451 (EQASNTNGTHQF). 4 disordered regions span residues 396 to 455 (NAAL…SPAG), 512 to 552 (YSTN…EEMD), 646 to 669 (PKRR…GSDE), and 682 to 704 (LQVQ…NSDD). The segment covering 516-546 (SISSQSPLQQSPDVNGMAPSPSQSESAGSVS) has biased composition (low complexity). Glu-540 is subject to Phosphoserine. The segment at residues 542 to 629 (AGSVSEGEEM…ILALRSIQGR (88 aa)) is a DNA-binding region (CUT 1). Residues 694–703 (SSASGSGNSD) show a composition bias toward low complexity. Position 763 is a phosphoserine (Ser-763). The interval 768 to 802 (SAAPEAGASALPNPPALKKEAQDAPGLDPQGAADC) is disordered. Glycyl lysine isopeptide (Lys-Gly) (interchain with G-Cter in SUMO2) cross-links involve residues Lys-785, Lys-811, and Lys-842. Residues 815 to 853 (GRSGAWKDHWWSAVQPERRNAASSEEAKAEETGGGKEKG) are compositionally biased toward basic and acidic residues. Residues 815 to 930 (GRSGAWKDHW…KPTKPSVPPL (116 aa)) form a disordered region. Composition is skewed to polar residues over residues 868 to 877 (SQLQGPSSSE) and 887 to 911 (SPYS…NSPL). Position 909 is a phosphoserine (Ser-909). Residues 934-1021 (QYEVYMYQEV…QGVLPVQGQQ (88 aa)) constitute a DNA-binding region (CUT 2). Over residues 1036-1049 (LQQGCVSSESTPKT) the composition is skewed to polar residues. Residues 1036 to 1110 (LQQGCVSSES…QPTTPLPLSG (75 aa)) form a disordered region. Residues 1050 to 1066 (SASCSPAPESPMSSSES) are compositionally biased toward low complexity. Phosphoserine is present on residues Ser-1059 and Ser-1069. Positions 1117-1204 (QELVAMSPEL…VEKLMDMKRM (88 aa)) form a DNA-binding region, CUT 3. The segment at 1210–1247 (MKRRHSSVSDSQPCEPPSVGTEYSQGASPQPQHQLKKP) is disordered. Residues 1230 to 1242 (TEYSQGASPQPQH) show a composition bias toward polar residues. Positions 1244 to 1303 (LKKPRVVLAPEEKEALKRAYQQKPYPSPKTIEDLATQLNLKTSTVINWFHNYRSRIRREL) form a DNA-binding region, homeobox. Ser-1270 carries the phosphoserine modification. Lys-1284 is covalently cross-linked (Glycyl lysine isopeptide (Lys-Gly) (interchain with G-Cter in SUMO2)). Residues 1312–1480 (SQGQAGASDS…SRDNPLRKKK (169 aa)) form a disordered region. Positions 1316 to 1333 (AGASDSPSARSGRAAPSS) are enriched in low complexity. Phosphoserine is present on Ser-1337. Composition is skewed to basic and acidic residues over residues 1353-1368 (EEPK…EVPR) and 1384-1394 (DDARDDDHEGG). 2 stretches are compositionally biased toward low complexity: residues 1405 to 1436 (PASA…AAPS) and 1443 to 1455 (NSSS…RPSS). The residue at position 1455 (Ser-1455) is a Phosphoserine. The span at 1467-1476 (GARDSRDNPL) shows a compositional bias: basic and acidic residues. Phosphoserine is present on residues Ser-1486 and Ser-1496.

It belongs to the CUT homeobox family. Interacts with BANP. Interacts with SATB1 (via DNA-binding domains); the interaction inhibits the attachment of both proteins to DNA. Phosphorylated by PKA. In terms of processing, as cells progress into S phase, a fraction of CUX1 molecules is proteolytically processed into N-terminally truncated proteins of 110 kDa by CTSL. Cell cycle-dependent processing of CUX1 serves to generate a CDP/Cux p110 with distinct DNA binding and transcriptional properties.

It localises to the nucleus. Functionally, transcription factor involved in the control of neuronal differentiation in the brain. Regulates dendrite development and branching, and dendritic spine formation in cortical layers II-III. Also involved in the control of synaptogenesis. In addition, it has probably a broad role in mammalian development as a repressor of developmentally regulated gene expression. May act by preventing binding of positively-activing CCAAT factors to promoters. Component of nf-munr repressor; binds to the matrix attachment regions (MARs) (5' and 3') of the immunoglobulin heavy chain enhancer. Represses T-cell receptor (TCR) beta enhancer function by binding to MARbeta, an ATC-rich DNA sequence located upstream of the TCR beta enhancer. Binds to the TH enhancer; may require the basic helix-loop-helix protein TCF4 as a coactivator. Plays a role in cell cycle progression, in particular at the G1/S transition. As cells progress into S phase, a fraction of CUX1 molecules is proteolytically processed into N-terminally truncated proteins of 110 kDa. While CUX1 only transiently binds to DNA and carries the CCAAT-displacement activity, CDP/Cux p110 makes a stable interaction with DNA and stimulates expression of genes such as POLA1. The polypeptide is Homeobox protein cut-like 1 (Homo sapiens (Human)).